A 164-amino-acid chain; its full sequence is Cytochrome c-type biogenesis protein CcmE (164 aa).

At 1–8 (MNPRRKSR) the chain is on the cytoplasmic side. Residues 9-29 (LYLAVVVLIGIGLTTTLVLYA) traverse the membrane as a helical; Signal-anchor for type II membrane protein segment. The Periplasmic segment spans residues 30–164 (LRSNIDLFYT…NSTAAQGNAS (135 aa)). 2 residues coordinate heme: H130 and Y134. Residues 131 to 150 (DEKYTPPEVKEAMKENHTRP) are compositionally biased toward basic and acidic residues. A disordered region spans residues 131 to 164 (DEKYTPPEVKEAMKENHTRPAEAYNSTAAQGNAS). Residues 154-164 (YNSTAAQGNAS) are compositionally biased toward polar residues.

Belongs to the CcmE/CycJ family.

It localises to the cell inner membrane. In terms of biological role, heme chaperone required for the biogenesis of c-type cytochromes. Transiently binds heme delivered by CcmC and transfers the heme to apo-cytochromes in a process facilitated by CcmF and CcmH. This is Cytochrome c-type biogenesis protein CcmE from Yersinia enterocolitica serotype O:8 / biotype 1B (strain NCTC 13174 / 8081).